The sequence spans 89 residues: Translation initiation factor IF-1, chloroplastic (89 aa).

Residues 1–72 (MKKQDLIDME…TKGRIIYRLR (72 aa)) form the S1-like domain.

This sequence belongs to the IF-1 family. As to quaternary structure, component of the 30S ribosomal translation pre-initiation complex which assembles on the 30S ribosome in the order IF-2 and IF-3, IF-1 and N-formylmethionyl-tRNA(fMet); mRNA recruitment can occur at any time during PIC assembly.

It localises to the plastid. Its subcellular location is the chloroplast. Its function is as follows. One of the essential components for the initiation of protein synthesis. Stabilizes the binding of IF-2 and IF-3 on the 30S subunit to which N-formylmethionyl-tRNA(fMet) subsequently binds. Helps modulate mRNA selection, yielding the 30S pre-initiation complex (PIC). Upon addition of the 50S ribosomal subunit IF-1, IF-2 and IF-3 are released leaving the mature 70S translation initiation complex. The polypeptide is Translation initiation factor IF-1, chloroplastic (Angiopteris evecta (Mule's foot fern)).